Consider the following 363-residue polypeptide: Pyrimidine monooxygenase RutA (363 aa).

Residues 49–50 (IK), Asn115, Glu124, 140–141 (RY), and Ser190 contribute to the FMN site.

It belongs to the NtaA/SnaA/DszA monooxygenase family. RutA subfamily.

It catalyses the reaction uracil + FMNH2 + NADH + O2 = (Z)-3-ureidoacrylate + FMN + NAD(+) + H2O + H(+). It carries out the reaction thymine + FMNH2 + NADH + O2 = (Z)-2-methylureidoacrylate + FMN + NAD(+) + H2O + H(+). Its function is as follows. Catalyzes the pyrimidine ring opening between N-3 and C-4 by an unusual flavin hydroperoxide-catalyzed mechanism, adding oxygen atoms in the process to yield ureidoacrylate peracid, that immediately reacts with FMN forming ureidoacrylate and FMN-N(5)-oxide. The FMN-N(5)-oxide reacts spontaneously with NADH to produce FMN. Requires the flavin reductase RutF to regenerate FMN in vivo. The polypeptide is Pyrimidine monooxygenase RutA (Escherichia coli (strain SMS-3-5 / SECEC)).